We begin with the raw amino-acid sequence, 538 residues long: MRHVQAEPSPSSEPEAGPSQPPVRQGALQGGLLMGYSPAGGATSPGVYQVSIFSPPAGTSEPHRALKRQAPPTEGPRELKRGPGLGAREGLPPEEPSTVGLLGPEGLGLGLGVASQHFSHRGLCVVEQRSSVTSSWTSGTWSPPCPPSNASCNTLHTRDWASPDPGGHGSLGESPGPAPPGQLHTLDTDLHSLAQIGGKSPVAGVGNGGSLWPRESPGTANGHSPEHTPPGPGPPGPCPTKRRLLPAGEAPDVSSEEEGPAPRRRRGSLGHPTAANSSDAKATSFWSHLLPGPKEPVLDPTDCSPMGRRLKGARRLKLSPLRSLRKGPGLLSPPSASPVPTPAVSRTLLGNFEESLLRGRFAPSGHIEGFTAEIGASGSYCPQHVTLPVTVTFFDVSEQNAPAPFLGIVDLNPLGRKGYSVPKVGTVQVTLFNPNQTVVKMFLVTFDFSDMPAAHMTFLRHRLFLVPVGEEGNANPTHRLLCYLLHLRFRSSRSGRLSLHGDIRLLFSRRSLELDTGLPYELQAVTEAPHNPRYSPLP.

Positions 1–18 are enriched in low complexity; sequence MRHVQAEPSPSSEPEAGP. 3 disordered regions span residues 1-103, 156-185, and 197-308; these read MRHV…GLLG, HTRD…QLHT, and GGKS…PMGR. The span at 227–238 shows a compositional bias: pro residues; sequence HTPPGPGPPGPC. Phosphoserine occurs at positions 254 and 255. The segment covering 274-286 has biased composition (polar residues); that stretch reads AANSSDAKATSFW. The interval 348–430 is required for macropage invasion; it reads LLGNFEESLL…VPKVGTVQVT (83 aa). Residues 436–444 are transactivation domain 1 (TAD1); the sequence is QTVVKMFLV.

This sequence belongs to the ATOS family.

It localises to the nucleus. Functionally, transcription regulator that may syncronize transcriptional and translational programs. The protein is Atos homolog protein B of Macaca fascicularis (Crab-eating macaque).